We begin with the raw amino-acid sequence, 437 residues long: UDP-N-acetylmuramoylalanine--D-glutamate ligase (437 aa).

Residue 112–118 (GSNGKST) participates in ATP binding.

It belongs to the MurCDEF family.

The protein resides in the cytoplasm. It carries out the reaction UDP-N-acetyl-alpha-D-muramoyl-L-alanine + D-glutamate + ATP = UDP-N-acetyl-alpha-D-muramoyl-L-alanyl-D-glutamate + ADP + phosphate + H(+). It functions in the pathway cell wall biogenesis; peptidoglycan biosynthesis. Cell wall formation. Catalyzes the addition of glutamate to the nucleotide precursor UDP-N-acetylmuramoyl-L-alanine (UMA). The polypeptide is UDP-N-acetylmuramoylalanine--D-glutamate ligase (murD) (Haemophilus influenzae (strain ATCC 51907 / DSM 11121 / KW20 / Rd)).